The following is a 668-amino-acid chain: Transketolase (668 aa).

H28 contacts substrate. Thiamine diphosphate is bound by residues H68 and 116 to 118 (GPL). Position 157 (D157) interacts with Mg(2+). Residues G158 and N187 each contribute to the thiamine diphosphate site. Mg(2+)-binding residues include N187 and I189. The substrate site is built by H263, R358, and S385. H263 lines the thiamine diphosphate pocket. The active-site Proton donor is E412. F438 serves as a coordination point for thiamine diphosphate. Substrate contacts are provided by H462, D470, H474, and R521.

Belongs to the transketolase family. Homodimer. Mg(2+) serves as cofactor. Thiamine diphosphate is required as a cofactor.

The enzyme catalyses D-sedoheptulose 7-phosphate + D-glyceraldehyde 3-phosphate = aldehydo-D-ribose 5-phosphate + D-xylulose 5-phosphate. Its function is as follows. Catalyzes the transfer of a two-carbon ketol group from a ketose donor to an aldose acceptor, likely via a covalent intermediate with the cofactor thiamine pyrophosphate. Can use L-erythrulose as donor and D-ribose-5-phosphate as acceptor substrates, forming glycolaldehyde and D-sedoheptulose-7-phosphate. For synthetic purposes, is able to use hydroxypyruvate (HPA) as donor substrate, making the reaction irreversible due to the release of carbon dioxide, and various aldehydes as acceptor substrates, which leads to the corresponding ketoses. Thus, using hydroxypyruvate as donor and three different aldehydes as acceptors, i.e. glycolaldehyde, D-glyceraldehyde and butyraldehyde, the enzyme stereoselectively forms the corresponding products L-erythrulose, D-xylulose and (3S)-1,3-dihydroxyhexan-2-one, respectively. The chain is Transketolase from Geobacillus stearothermophilus (Bacillus stearothermophilus).